Here is a 153-residue protein sequence, read N- to C-terminus: 3-hydroxyacyl-[acyl-carrier-protein] dehydratase FabZ (153 aa).

His-58 is a catalytic residue.

The protein belongs to the thioester dehydratase family. FabZ subfamily.

It is found in the cytoplasm. The catalysed reaction is a (3R)-hydroxyacyl-[ACP] = a (2E)-enoyl-[ACP] + H2O. Its function is as follows. Involved in unsaturated fatty acids biosynthesis. Catalyzes the dehydration of short chain beta-hydroxyacyl-ACPs and long chain saturated and unsaturated beta-hydroxyacyl-ACPs. The chain is 3-hydroxyacyl-[acyl-carrier-protein] dehydratase FabZ from Bradyrhizobium diazoefficiens (strain JCM 10833 / BCRC 13528 / IAM 13628 / NBRC 14792 / USDA 110).